We begin with the raw amino-acid sequence, 95 residues long: Large ribosomal subunit protein bL25 (95 aa).

The protein belongs to the bacterial ribosomal protein bL25 family. Part of the 50S ribosomal subunit; part of the 5S rRNA/L5/L18/L25 subcomplex. Contacts the 5S rRNA. Binds to the 5S rRNA independently of L5 and L18.

This is one of the proteins that binds to the 5S RNA in the ribosome where it forms part of the central protuberance. This Actinobacillus pleuropneumoniae serotype 3 (strain JL03) protein is Large ribosomal subunit protein bL25.